A 219-amino-acid chain; its full sequence is Probable GTP-binding protein EngB (219 aa).

One can recognise an EngB-type G domain in the interval 31–205 (VGVEIAFAGR…LAILNEWCHP (175 aa)). GTP is bound by residues 39–46 (GRSNAGKS), 66–70 (GRTQL), 84–87 (DLPG), 151–154 (TKSD), and 184–186 (FSS). Mg(2+) is bound by residues Ser46 and Thr68.

This sequence belongs to the TRAFAC class TrmE-Era-EngA-EngB-Septin-like GTPase superfamily. EngB GTPase family. Mg(2+) is required as a cofactor.

Its function is as follows. Necessary for normal cell division and for the maintenance of normal septation. In Shewanella baltica (strain OS223), this protein is Probable GTP-binding protein EngB.